The following is a 390-amino-acid chain: Ribosomal RNA large subunit methyltransferase G (390 aa).

It belongs to the methyltransferase superfamily. RlmG family.

The protein resides in the cytoplasm. The enzyme catalyses guanosine(1835) in 23S rRNA + S-adenosyl-L-methionine = N(2)-methylguanosine(1835) in 23S rRNA + S-adenosyl-L-homocysteine + H(+). Specifically methylates the guanine in position 1835 (m2G1835) of 23S rRNA. The sequence is that of Ribosomal RNA large subunit methyltransferase G from Alcanivorax borkumensis (strain ATCC 700651 / DSM 11573 / NCIMB 13689 / SK2).